A 912-amino-acid chain; its full sequence is Metabotropic glutamate receptor 4 (912 aa).

The N-terminal stretch at 1–32 (MSGKGGWAWWWARLPLCLLLSLYGSWVPSSLG) is a signal peptide. Residues 33–586 (KPKGHPHMNS…PIVKLEWDSP (554 aa)) are Extracellular-facing. The cysteines at positions 67 and 109 are disulfide-linked. Residue N98 is glycosylated (N-linked (GlcNAc...) asparagine). L-glutamate-binding positions include S159, 180 to 182 (AST), and Y230. Intrachain disulfides connect C249/C538, C372/C388, C428/C435, C520/C539, C524/C542, C545/C557, and C560/C573. Residue N301 is glycosylated (N-linked (GlcNAc...) asparagine). Residue D312 coordinates L-glutamate. K405 contributes to the L-glutamate binding site. A helical transmembrane segment spans residues 587-607 (WAVLPLFLAVVGIAATLFVVV). The Cytoplasmic portion of the chain corresponds to 608–624 (TFVRYNDTPIVKASGRE). The helical transmembrane segment at 625–645 (LSYVLLAGIFLCYATTFLMIA) threads the bilayer. Over 646–653 (EPDLGTCS) the chain is Extracellular. Residues 654–671 (LRRIFLGLGMSISYAALL) form a helical membrane-spanning segment. The Cytoplasmic segment spans residues 672-699 (TKTNRIYRIFEQGKRSVSAPRFISPASQ). Residues 700–720 (LAITFVLISLQLLCICVWFVV) traverse the membrane as a helical segment. The Extracellular segment spans residues 721–751 (DPSHSVVDFQDQRTLDPRFARGVLKCDISDL). The chain crosses the membrane as a helical span at residues 752–772 (SLICLLGYSMLLMVTCTVYAI). The Cytoplasmic portion of the chain corresponds to 773–786 (KTRGVPETFNEAKP). A helical membrane pass occupies residues 787-807 (IGFTMYTTCIVWLAFIPIFFG). Over 808–826 (TSQSADKLYIQTTTLTVSV) the chain is Extracellular. Residues 827 to 847 (SLSASVSLGMLYMPKVYIILF) form a helical membrane-spanning segment. The Cytoplasmic portion of the chain corresponds to 848-912 (HPEQNVPKRK…TYVTYTNHAI (65 aa)).

It belongs to the G-protein coupled receptor 3 family. Interacts with PICK1.

Its subcellular location is the cell membrane. Its function is as follows. G-protein coupled receptor for glutamate. Ligand binding causes a conformation change that triggers signaling via guanine nucleotide-binding proteins (G proteins) and modulates the activity of down-stream effectors. Signaling inhibits adenylate cyclase activity. The chain is Metabotropic glutamate receptor 4 (Grm4) from Mus musculus (Mouse).